We begin with the raw amino-acid sequence, 333 residues long: Testin-2 (333 aa).

A signal peptide spans 1 to 17; it reads MIAVLFLAILCLEVDST. Disulfide bonds link Cys-135/Cys-178, Cys-169/Cys-211, and Cys-269/Cys-322. N-linked (GlcNAc...) asparagine glycosylation is present at Asn-173. Active-site residues include His-276 and Asn-300.

The protein belongs to the peptidase C1 family. As to expression, sertoli cells.

The protein resides in the secreted. The protein is Testin-2 (Testin) of Rattus norvegicus (Rat).